Consider the following 349-residue polypeptide: Ion-translocating oxidoreductase complex subunit D (349 aa).

3 helical membrane-spanning segments follow: residues 20-42 (VMQR…FGWG), 77-99 (SAML…WMIV), and 124-144 (AMAA…TWIA). Threonine 185 bears the FMN phosphoryl threonine mark. A run of 5 helical transmembrane segments spans residues 212 to 232 (STGV…LVLL), 239 to 259 (WHIS…GFLL), 265 to 285 (ASPL…FIAT), 291 to 311 (ATSP…VYII), and 315 to 335 (GGYP…APFI).

Belongs to the NqrB/RnfD family. The complex is composed of six subunits: RnfA, RnfB, RnfC, RnfD, RnfE and RnfG. FMN is required as a cofactor.

The protein resides in the cell inner membrane. Part of a membrane-bound complex that couples electron transfer with translocation of ions across the membrane. The protein is Ion-translocating oxidoreductase complex subunit D of Shewanella baltica (strain OS185).